The sequence spans 394 residues: Cell division protein FtsZ (394 aa).

GTP-binding positions include 21–25 (GGGNN), Arg29, 108–110 (GTG), Glu139, Arg143, Asn166, and Asp187. A disordered region spans residues 317 to 394 (DKPSSQGRKA…EERRSRRTRR (78 aa)). Low complexity-rich tracts occupy residues 328–346 (STGF…SGAS) and 353–364 (SAHTSHSQSSES). The segment covering 365-388 (VSERSHTTKDDDIPSFIRNREERR) has biased composition (basic and acidic residues).

This sequence belongs to the FtsZ family. Homodimer. Polymerizes to form a dynamic ring structure in a strictly GTP-dependent manner. Interacts directly with several other division proteins.

It is found in the cytoplasm. Functionally, essential cell division protein that forms a contractile ring structure (Z ring) at the future cell division site. The regulation of the ring assembly controls the timing and the location of cell division. One of the functions of the FtsZ ring is to recruit other cell division proteins to the septum to produce a new cell wall between the dividing cells. Binds GTP and shows GTPase activity. The sequence is that of Cell division protein FtsZ from Staphylococcus epidermidis (strain ATCC 35984 / DSM 28319 / BCRC 17069 / CCUG 31568 / BM 3577 / RP62A).